We begin with the raw amino-acid sequence, 190 residues long: Peptide deformylase (190 aa).

2 residues coordinate Fe cation: Cys-94 and His-136. The active site involves Glu-137. A Fe cation-binding site is contributed by His-140.

Belongs to the polypeptide deformylase family. Fe(2+) serves as cofactor.

The enzyme catalyses N-terminal N-formyl-L-methionyl-[peptide] + H2O = N-terminal L-methionyl-[peptide] + formate. In terms of biological role, removes the formyl group from the N-terminal Met of newly synthesized proteins. Requires at least a dipeptide for an efficient rate of reaction. N-terminal L-methionine is a prerequisite for activity but the enzyme has broad specificity at other positions. The protein is Peptide deformylase of Chlorobium luteolum (strain DSM 273 / BCRC 81028 / 2530) (Pelodictyon luteolum).